The following is a 799-amino-acid chain: MEERGPDIEKYGSQPCTPLSFDPMLPSTSRVATPVRPSSTLSARQAPASPFRAQPQNMEPSISRVHELREGAAVKRSYTNDWMQGNYIPPNPQQQQYQRPPSMIGSTISNMSNLSHMTKFSALSVNTQCGQFDNWIYQSQPALSKVSHSSVENQDPMKRRERMSIPEIVQSLASYEMSDQVAAIRELEPLAKAEALESTYCQADLGKIINALFEVLVPRPQENENVIRKVFEILHRAAVPKHVRMTEKIFHSLNLELMNTNSSKHSFQVPRPYSIYELVIERASRLDTAYDQAAMLLLAQICCKPFFMKYVFSEKEQSAGHRRLHEVVMQFAIKNLQQQETKRKSKGFCVSIIKNLSRRNRSIWSIVYELHVIPIFHDIIKDEYSDEDLLWPTMQALTTFCSIERVGEDFVKLGGAQDLCNLLYHGSTRLLHELLACMQRLSLLQEIGNQDMEESIRRVIQVVGSDDATIAERATGVLRNIGQPNKQNKVIMVRNGVTAHAIAVLRTSMRFQSQLREQQNARTPKNQIDAAKNQILSIYENCLSILNNVTKMGKDDILDSAIQACRMISANPDAAIVLLHFLNAGAPKCRKLAVNVMKRVIENVPAFAEPFVDLPGTTQETLPILLLKRAYESLDEWKKAVVEVMRSEPNTQQFRDAIEKRQDHEDIVWKSVSLLSNLCRNGNPRFFERVKVEMLYTRPTNPFTSLFPEMSDVILYEWLDFILAICGTEWSLQNCLMYHFLKQANITHEYLLHYRRPNPQICDKIKNIIDTGMRQQQQHNQLEQMAMMHAQQQHQQLPM.

Basic and acidic residues predominate over residues 1 to 10 (MEERGPDIEK). The interval 1-60 (MEERGPDIEKYGSQPCTPLSFDPMLPSTSRVATPVRPSSTLSARQAPASPFRAQPQNMEP) is disordered. Polar residues predominate over residues 26–43 (PSTSRVATPVRPSSTLSA). Residues 454–496 (ESIRRVIQVVGSDDATIAERATGVLRNIGQPNKQNKVIMVRNG) form an ARM repeat.

Interacts (independently of ARM repeat) with nhr-25. Component of the beta-catenin-lit-1 complex (also called the lit-1/wrm-1 complex or the wrm-1/lit-1 kinase complex) at least composed of lit-1 and wrm-1. Interacts (via N-terminus) with lit-1; the interaction is direct and activates lit-1 kinase activity which leads to the phosphorylation of pop-1. This promotes pop-1 interaction with par-5 and translocation of pop-1 from the nucleus to the cytoplasm.

It localises to the cytoplasm. Its subcellular location is the cell cortex. The protein localises to the nucleus. Its function is as follows. Antagonistic role in the Wnt signaling pathway that operates in embryogenesis. When located at the cortex it has been shown to inhibit Wnt signaling during asymmetric cell division but when relocated to the nucleus it shows positive regulation. Has a role in blastomere signaling during endoderm specification. Component of the beta-catenin-lit-1 complex which promotes phosphorylation, down-regulation and subcellular relocation of pop-1. Within the complex, activates lit-1-dependent kinase activity. Can substitute for bar-1 indicating functional redundancy. Appears to have a role in centrosome positioning. Involved in the development of distal tip cells (DTC) by regulating the asymmetric distribution of cye-1 and cki-1 between the daughters of Z1.a and Z4.p cells. In Caenorhabditis briggsae, this protein is Armadillo repeat-containing protein wrm-1.